A 325-amino-acid chain; its full sequence is G-protein coupled receptor E6 (325 aa).

7 helical membrane passes run 45 to 65 (LFGT…MGFF), 71 to 91 (FTPS…LWLM), 106 to 126 (IVTE…NVGM), 145 to 165 (PAAI…VIAV), 198 to 218 (LVAK…GTAL), 233 to 253 (AICV…LTAM), and 274 to 294 (VFIY…MFTG).

Belongs to the G-protein coupled receptor 1 family.

The protein resides in the host membrane. This Equus caballus (Horse) protein is G-protein coupled receptor E6 (E6).